Here is a 709-residue protein sequence, read N- to C-terminus: MATCAEILRSEFPEIDGQVFDYVTGVLHSGSADFESVDDLVEAVGELLQEVSGDSKDDAGIRAVCQRMYNTLRLAEPQSQGNSQVLLDAPIQLSKITENYDCGTKLPGLLKREQSSTVNAKKLEKAEARLKAKQEKRSEKDTLKTSNPLVLEEASASQAGSRKESRLESSGKNKSYDVRIENFDVSFGDRVLLAGADVNLAWGRRYGLVGRNGLGKTTLLKMLATRSLRVPAHISLLHVEQEVAEDDTPALQSVLESDSVREDLLRRERELSAHIAAGRVEGSEAAELAEIYAKLEEIEADKAPARASVILAGLGFTPKMQQQPTREFSGGWRMRLALARALFARPDLLLLDEPTNMLDVRAILWLENYLQTWPSTILVVSHDRNFLNAIAADIIHLHSQRLDGYRGDFETFIKSKQERLLNQQREYEAQQQYRQHIQVFIDRFRYNANRASQVQSKLKMLEKLPELKPVDKESEVVMKFPDGFEKFSPPILQLDEVDFYYDPKHVIFSRLSVSADLESRICVVGENGAGKSTMLKLLLGDLAPVRGIRHAHRNLKIGYFSQHHVEQLDLNVSAVELLARKFPGRPEEEYRHQLGRYGISGELAMRPVASLSGGQKSRVAFAQMTMPCPNFYILDEPTNHLDMETIEALGRALNNFRGGVILVSHDERFIRLVCRELWVCEGGGVTRVEGGFDQYRALLQEQFRREGFL.

Alanine 2 carries the post-translational modification N-acetylalanine. Serine 83 carries the phosphoserine modification. A compositionally biased stretch (basic and acidic residues) spans 129 to 143 (RLKAKQEKRSEKDTL). Residues 129–171 (RLKAKQEKRSEKDTLKTSNPLVLEEASASQAGSRKESRLESSG) form a disordered region. A phosphoserine mark is found at serine 155, serine 157, and serine 161. Residues 161 to 171 (SRKESRLESSG) are compositionally biased toward basic and acidic residues. ABC transporter domains follow at residues 178 to 424 (VRIE…LNQQ) and 492 to 707 (LQLD…RREG). 210–217 (GRNGLGKT) lines the ATP pocket. Serine 283 carries the post-translational modification Phosphoserine. 525–532 (GENGAGKS) serves as a coordination point for ATP.

The protein belongs to the ABC transporter superfamily. ABCF family. EF3 subfamily.

Its function is as follows. Displays an antiviral effect against flaviviruses in the presence of OAS1B. This Pongo abelii (Sumatran orangutan) protein is ATP-binding cassette sub-family F member 3 (ABCF3).